We begin with the raw amino-acid sequence, 773 residues long: Probable dipeptidyl peptidase 4 (773 aa).

The N-terminal stretch at 1–18 (MKLSVLSVLLVSVAQAAA) is a signal peptide. N-linked (GlcNAc...) asparagine glycosylation is found at asparagine 37, asparagine 80, asparagine 112, asparagine 220, asparagine 471, and asparagine 496. The Charge relay system role is filled by serine 619. Asparagine 671 is a glycosylation site (N-linked (GlcNAc...) asparagine). Active-site charge relay system residues include aspartate 696 and histidine 731.

Belongs to the peptidase S9B family.

It localises to the secreted. It carries out the reaction Release of an N-terminal dipeptide, Xaa-Yaa-|-Zaa-, from a polypeptide, preferentially when Yaa is Pro, provided Zaa is neither Pro nor hydroxyproline.. Functionally, extracellular dipeptidyl-peptidase which removes N-terminal dipeptides sequentially from polypeptides having unsubstituted N-termini provided that the penultimate residue is proline. This chain is Probable dipeptidyl peptidase 4 (dpp4), found in Emericella nidulans (strain FGSC A4 / ATCC 38163 / CBS 112.46 / NRRL 194 / M139) (Aspergillus nidulans).